We begin with the raw amino-acid sequence, 377 residues long: PqqA peptide cyclase (377 aa).

Residues 12-228 (FGIPLAVLLE…EAARERLKGQ (217 aa)) enclose the Radical SAM core domain. 3 residues coordinate [4Fe-4S] cluster: cysteine 26, cysteine 30, and cysteine 33.

It belongs to the radical SAM superfamily. PqqE family. Interacts with PqqD. The interaction is necessary for activity of PqqE. The cofactor is [4Fe-4S] cluster.

The catalysed reaction is [PQQ precursor protein] + S-adenosyl-L-methionine = E-Y cross-linked-[PQQ precursor protein] + 5'-deoxyadenosine + L-methionine + H(+). The protein operates within cofactor biosynthesis; pyrroloquinoline quinone biosynthesis. In terms of biological role, catalyzes the cross-linking of a glutamate residue and a tyrosine residue in the PqqA protein as part of the biosynthesis of pyrroloquinoline quinone (PQQ). This chain is PqqA peptide cyclase, found in Rhodopseudomonas palustris (strain ATCC BAA-98 / CGA009).